Reading from the N-terminus, the 712-residue chain is Polyribonucleotide nucleotidyltransferase (712 aa).

Mg(2+) is bound by residues Asp487 and Asp493. Residues 554–613 form the KH domain; it reads PKIITMTINPDKIRDVIGPSGKQINKIIEETGVKIDIEQDGTVFISSINQEMNDKAKKII. One can recognise an S1 motif domain in the interval 623 to 691; the sequence is GEIYEGKVKR…KQGRVNLSRK (69 aa).

This sequence belongs to the polyribonucleotide nucleotidyltransferase family. Requires Mg(2+) as cofactor.

The protein resides in the cytoplasm. It carries out the reaction RNA(n+1) + phosphate = RNA(n) + a ribonucleoside 5'-diphosphate. Its function is as follows. Involved in mRNA degradation. Catalyzes the phosphorolysis of single-stranded polyribonucleotides processively in the 3'- to 5'-direction. The polypeptide is Polyribonucleotide nucleotidyltransferase (Bacillus cereus (strain AH187)).